An 874-amino-acid polypeptide reads, in one-letter code: Probable inorganic carbon transporter subunit DabA (874 aa).

Zn(2+) is bound by residues Cys-398, Asp-400, His-580, and Cys-595.

This sequence belongs to the inorganic carbon transporter (TC 9.A.2) DabA family. As to quaternary structure, forms a complex with DabB. Requires Zn(2+) as cofactor.

It is found in the cell membrane. Part of an energy-coupled inorganic carbon pump. The sequence is that of Probable inorganic carbon transporter subunit DabA from Bacillus cereus (strain ZK / E33L).